We begin with the raw amino-acid sequence, 584 residues long: Aspartate--tRNA(Asp/Asn) ligase (584 aa).

L-aspartate is bound at residue E173. The tract at residues 197 to 200 (QLFK) is aspartate. An L-aspartate-binding site is contributed by R219. Residues 219–221 (RDE) and Q228 contribute to the ATP site. Residue H447 participates in L-aspartate binding. E477 contacts ATP. R484 serves as a coordination point for L-aspartate. 529 to 532 (GFDR) is an ATP binding site.

This sequence belongs to the class-II aminoacyl-tRNA synthetase family. Type 1 subfamily. Homodimer.

The protein resides in the cytoplasm. The catalysed reaction is tRNA(Asx) + L-aspartate + ATP = L-aspartyl-tRNA(Asx) + AMP + diphosphate. In terms of biological role, aspartyl-tRNA synthetase with relaxed tRNA specificity since it is able to aspartylate not only its cognate tRNA(Asp) but also tRNA(Asn). Reaction proceeds in two steps: L-aspartate is first activated by ATP to form Asp-AMP and then transferred to the acceptor end of tRNA(Asp/Asn). This chain is Aspartate--tRNA(Asp/Asn) ligase, found in Campylobacter hominis (strain ATCC BAA-381 / DSM 21671 / CCUG 45161 / LMG 19568 / NCTC 13146 / CH001A).